The chain runs to 376 residues: Succinyl-diaminopimelate desuccinylase (376 aa).

Histidine 66 lines the Zn(2+) pocket. Aspartate 68 is a catalytic residue. Aspartate 99 lines the Zn(2+) pocket. Glutamate 133 (proton acceptor) is an active-site residue. The Zn(2+) site is built by glutamate 134, glutamate 162, and histidine 348.

This sequence belongs to the peptidase M20A family. DapE subfamily. In terms of assembly, homodimer. It depends on Zn(2+) as a cofactor. Co(2+) is required as a cofactor.

The catalysed reaction is N-succinyl-(2S,6S)-2,6-diaminopimelate + H2O = (2S,6S)-2,6-diaminopimelate + succinate. Its pathway is amino-acid biosynthesis; L-lysine biosynthesis via DAP pathway; LL-2,6-diaminopimelate from (S)-tetrahydrodipicolinate (succinylase route): step 3/3. In terms of biological role, catalyzes the hydrolysis of N-succinyl-L,L-diaminopimelic acid (SDAP), forming succinate and LL-2,6-diaminopimelate (DAP), an intermediate involved in the bacterial biosynthesis of lysine and meso-diaminopimelic acid, an essential component of bacterial cell walls. This Nitrosococcus oceani (strain ATCC 19707 / BCRC 17464 / JCM 30415 / NCIMB 11848 / C-107) protein is Succinyl-diaminopimelate desuccinylase.